The primary structure comprises 479 residues: Ribulose bisphosphate carboxylase large chain (479 aa).

Positions 1-2 are excised as a propeptide; that stretch reads MS. Substrate-binding residues include Asn-123 and Thr-173. The active-site Proton acceptor is Lys-175. Lys-177 serves as a coordination point for substrate. Residues Lys-201, Asp-203, and Glu-204 each coordinate Mg(2+). N6-carboxylysine is present on Lys-201. Position 208 is a phosphoserine (Ser-208). The active-site Proton acceptor is His-294. Substrate is bound by residues Arg-295 and His-327. Thr-330 carries the phosphothreonine modification. Ser-379 serves as a coordination point for substrate.

Belongs to the RuBisCO large chain family. Type I subfamily. Heterohexadecamer of 8 large chains and 8 small chains; disulfide-linked. The disulfide link is formed within the large subunit homodimers. It depends on Mg(2+) as a cofactor. The disulfide bond which can form in the large chain dimeric partners within the hexadecamer appears to be associated with oxidative stress and protein turnover.

Its subcellular location is the plastid. It localises to the chloroplast. The enzyme catalyses 2 (2R)-3-phosphoglycerate + 2 H(+) = D-ribulose 1,5-bisphosphate + CO2 + H2O. It catalyses the reaction D-ribulose 1,5-bisphosphate + O2 = 2-phosphoglycolate + (2R)-3-phosphoglycerate + 2 H(+). In terms of biological role, ruBisCO catalyzes two reactions: the carboxylation of D-ribulose 1,5-bisphosphate, the primary event in carbon dioxide fixation, as well as the oxidative fragmentation of the pentose substrate in the photorespiration process. Both reactions occur simultaneously and in competition at the same active site. The protein is Ribulose bisphosphate carboxylase large chain of Lobularia maritima (Sweet alyssum).